Reading from the N-terminus, the 546-residue chain is MAAKDVKFGNDARSKMLRGVNVLADAVKVTLGPKGRNVVLDKSFGSPMITKDGVSVAREVELEDKFENMGAQMLKEVASKANDAAGDGTTTATVLAQSIVNEGLKAVAAGMNPMDLKRGIDKAVIGAVAELKKLSVPCSDSKSIAQVGTISANADKTVGTLIAEAMEKVGKEGVITVEEGSGLQDELDVVEGMQFDRGYLSPYFVNKPEARSVELDNPFILLSDKKISNIREMLPILESVAKAGKPLLIIAEDVEGEALATLVVNNMRGIVKVAAVKAPGFGDRRKAMLQDIAILTSGTVISEEMGLDLEKSTLEDMGQAKRVVITKDTTTIIDGTGNKSMISSRVSQINQERDEATSDYDKEKLQERVAKLAGGVAVIKVGAATEVEMKEKKARVEDALHATRAAVEEGVVAGGGVALIRVANRIVNLRGENEDQNVGIRVARRAMEAPLRQIVANAGEEPSVIANKVKAGEGNTGYNAATEVYGNMIDMGILDPTKVTRSALQYAASIAGLMITTECMITDLPKEEKPDLSGAGAGMGGMGGMM.

ATP-binding positions include 30-33 (TLGP), lysine 51, 87-91 (DGTTT), glycine 415, 479-481 (NAA), and aspartate 495. The segment at 526-546 (KEEKPDLSGAGAGMGGMGGMM) is disordered. Positions 535–546 (AGAGMGGMGGMM) are enriched in gly residues.

This sequence belongs to the chaperonin (HSP60) family. As to quaternary structure, forms a cylinder of 14 subunits composed of two heptameric rings stacked back-to-back. Interacts with the co-chaperonin GroES.

The protein resides in the cytoplasm. It carries out the reaction ATP + H2O + a folded polypeptide = ADP + phosphate + an unfolded polypeptide.. Functionally, together with its co-chaperonin GroES, plays an essential role in assisting protein folding. The GroEL-GroES system forms a nano-cage that allows encapsulation of the non-native substrate proteins and provides a physical environment optimized to promote and accelerate protein folding. In Wigglesworthia glossinidia brevipalpis, this protein is Chaperonin GroEL.